The primary structure comprises 211 residues: N,O-diacetylmuramidase (211 aa).

Residues Asp6 and Glu100 contribute to the active site. A disulfide bridge connects residues Cys108 and Cys147.

The protein belongs to the glycosyl hydrolase 25 family.

It localises to the secreted. The protein resides in the extracellular space. The enzyme catalyses Hydrolysis of (1-&gt;4)-beta-linkages between N-acetylmuramic acid and N-acetyl-D-glucosamine residues in a peptidoglycan and between N-acetyl-D-glucosamine residues in chitodextrins.. Its function is as follows. This enzyme has both lysozyme (acetylmuramidase) and diacetylmuramidase activities. The sequence is that of N,O-diacetylmuramidase from Chalaropsis sp.